Here is a 550-residue protein sequence, read N- to C-terminus: tRNA modification GTPase MnmE (550 aa).

(6S)-5-formyl-5,6,7,8-tetrahydrofolate is bound by residues R20, E78, and R116. The 267-residue stretch at 212–478 (GFSVVIVGKP…LLDKIFDIIS (267 aa)) folds into the TrmE-type G domain. N222 contributes to the K(+) binding site. GTP-binding positions include 222–227 (NVGKST), 241–247 (TDIPGTT), and 266–269 (DTAG). S226 lines the Mg(2+) pocket. K(+) contacts are provided by T241, I243, and T246. Mg(2+) is bound at residue T247. Position 550 (K550) interacts with (6S)-5-formyl-5,6,7,8-tetrahydrofolate.

Belongs to the TRAFAC class TrmE-Era-EngA-EngB-Septin-like GTPase superfamily. TrmE GTPase family. As to quaternary structure, homodimer. Heterotetramer of two MnmE and two MnmG subunits. Requires K(+) as cofactor.

It localises to the cytoplasm. Exhibits a very high intrinsic GTPase hydrolysis rate. Involved in the addition of a carboxymethylaminomethyl (cmnm) group at the wobble position (U34) of certain tRNAs, forming tRNA-cmnm(5)s(2)U34. The polypeptide is tRNA modification GTPase MnmE (Neorickettsia sennetsu (strain ATCC VR-367 / Miyayama) (Ehrlichia sennetsu)).